The primary structure comprises 338 residues: Nicotinate-nucleotide--dimethylbenzimidazole phosphoribosyltransferase (338 aa).

The active-site Proton acceptor is Glu305.

The protein belongs to the CobT family.

It catalyses the reaction 5,6-dimethylbenzimidazole + nicotinate beta-D-ribonucleotide = alpha-ribazole 5'-phosphate + nicotinate + H(+). It participates in nucleoside biosynthesis; alpha-ribazole biosynthesis; alpha-ribazole from 5,6-dimethylbenzimidazole: step 1/2. Catalyzes the synthesis of alpha-ribazole-5'-phosphate from nicotinate mononucleotide (NAMN) and 5,6-dimethylbenzimidazole (DMB). The chain is Nicotinate-nucleotide--dimethylbenzimidazole phosphoribosyltransferase from Rhizobium johnstonii (strain DSM 114642 / LMG 32736 / 3841) (Rhizobium leguminosarum bv. viciae).